Consider the following 483-residue polypeptide: tRNA-2-methylthio-N(6)-dimethylallyladenosine synthase (483 aa).

One can recognise an MTTase N-terminal domain in the interval 31–148 (KKLYIETQGC…LPQMLDQHHA (118 aa)). 6 residues coordinate [4Fe-4S] cluster: cysteine 40, cysteine 77, cysteine 111, cysteine 192, cysteine 196, and cysteine 199. One can recognise a Radical SAM core domain in the interval 178 to 410 (RVEGFKAFVS…QQVIKQSSIE (233 aa)). The 65-residue stretch at 413–477 (DAMLGKIERV…LNLVYGELLN (65 aa)) folds into the TRAM domain.

It belongs to the methylthiotransferase family. MiaB subfamily. As to quaternary structure, monomer. The cofactor is [4Fe-4S] cluster.

It is found in the cytoplasm. The enzyme catalyses N(6)-dimethylallyladenosine(37) in tRNA + (sulfur carrier)-SH + AH2 + 2 S-adenosyl-L-methionine = 2-methylsulfanyl-N(6)-dimethylallyladenosine(37) in tRNA + (sulfur carrier)-H + 5'-deoxyadenosine + L-methionine + A + S-adenosyl-L-homocysteine + 2 H(+). Its function is as follows. Catalyzes the methylthiolation of N6-(dimethylallyl)adenosine (i(6)A), leading to the formation of 2-methylthio-N6-(dimethylallyl)adenosine (ms(2)i(6)A) at position 37 in tRNAs that read codons beginning with uridine. The sequence is that of tRNA-2-methylthio-N(6)-dimethylallyladenosine synthase from Acinetobacter baumannii (strain ACICU).